We begin with the raw amino-acid sequence, 808 residues long: Type VI secretion system spike protein VgrG4b (808 aa).

Belongs to the VgrG protein family.

The protein resides in the secreted. Functionally, part of the H2 type VI secretion system (H2-T6SS) specialized secretion system, which delivers several virulence factors in both prokaryotic and eukaryotic cells during infection. Allows the delivery of the phospholipase effector PldA to target cells where it exerts its toxicity. This chain is Type VI secretion system spike protein VgrG4b, found in Pseudomonas aeruginosa (strain ATCC 15692 / DSM 22644 / CIP 104116 / JCM 14847 / LMG 12228 / 1C / PRS 101 / PAO1).